A 301-amino-acid chain; its full sequence is Sulfate adenylyltransferase subunit 2 (301 aa).

Belongs to the PAPS reductase family. CysD subfamily. In terms of assembly, heterodimer composed of CysD, the smaller subunit, and CysN.

The enzyme catalyses sulfate + ATP + H(+) = adenosine 5'-phosphosulfate + diphosphate. The protein operates within sulfur metabolism; hydrogen sulfide biosynthesis; sulfite from sulfate: step 1/3. With CysN forms the ATP sulfurylase (ATPS) that catalyzes the adenylation of sulfate producing adenosine 5'-phosphosulfate (APS) and diphosphate, the first enzymatic step in sulfur assimilation pathway. APS synthesis involves the formation of a high-energy phosphoric-sulfuric acid anhydride bond driven by GTP hydrolysis by CysN coupled to ATP hydrolysis by CysD. This chain is Sulfate adenylyltransferase subunit 2, found in Shewanella woodyi (strain ATCC 51908 / MS32).